We begin with the raw amino-acid sequence, 268 residues long: tRNA pseudouridine synthase A (268 aa).

Asp-52 serves as the catalytic Nucleophile. Residue Tyr-110 coordinates substrate.

This sequence belongs to the tRNA pseudouridine synthase TruA family. In terms of assembly, homodimer.

It catalyses the reaction uridine(38/39/40) in tRNA = pseudouridine(38/39/40) in tRNA. Functionally, formation of pseudouridine at positions 38, 39 and 40 in the anticodon stem and loop of transfer RNAs. This is tRNA pseudouridine synthase A from Prochlorococcus marinus (strain MIT 9215).